The following is a 251-amino-acid chain: Hydroxyacylglutathione hydrolase (251 aa).

Histidine 53, histidine 55, aspartate 57, histidine 58, histidine 110, aspartate 127, and histidine 165 together coordinate Zn(2+).

Belongs to the metallo-beta-lactamase superfamily. Glyoxalase II family. In terms of assembly, monomer. Requires Zn(2+) as cofactor.

The catalysed reaction is an S-(2-hydroxyacyl)glutathione + H2O = a 2-hydroxy carboxylate + glutathione + H(+). It functions in the pathway secondary metabolite metabolism; methylglyoxal degradation; (R)-lactate from methylglyoxal: step 2/2. In terms of biological role, thiolesterase that catalyzes the hydrolysis of S-D-lactoyl-glutathione to form glutathione and D-lactic acid. The protein is Hydroxyacylglutathione hydrolase of Escherichia coli O6:H1 (strain CFT073 / ATCC 700928 / UPEC).